A 148-amino-acid polypeptide reads, in one-letter code: Hemoglobin subunit beta-B (148 aa).

The region spanning 3–148 (DWTDAERAAI…VVSALGRQYH (146 aa)) is the Globin domain. Heme b contacts are provided by His64 and His93.

Belongs to the globin family. In terms of assembly, heterotetramer of two alpha chains and two beta chains. Red blood cells.

In terms of biological role, involved in oxygen transport from gills to the various peripheral tissues. This chain is Hemoglobin subunit beta-B (hbb2), found in Seriola quinqueradiata (Five-ray yellowtail).